The primary structure comprises 867 residues: Putative RNA-directed RNA polymerase (867 aa).

Residues 561–676 (PVAIGVDASR…ITDRANEKLF (116 aa)) form the RdRp catalytic domain.

Belongs to the luteoviruses RNA polymerase family.

The catalysed reaction is RNA(n) + a ribonucleoside 5'-triphosphate = RNA(n+1) + diphosphate. Functionally, probable polymerase. In Barley yellow dwarf virus (isolate MAV) (BYDV), this protein is Putative RNA-directed RNA polymerase.